A 230-amino-acid chain; its full sequence is Complex I assembly factor TMEM126B, mitochondrial (230 aa).

Position 34 is a phosphoserine (Ser34). The next 4 helical transmembrane spans lie at 72–92 (IYQM…SNFL), 110–130 (LATL…IDAL), 141–161 (VFRS…SLAF), and 199–219 (IPLV…YAVF).

The protein belongs to the TMEM126 family. Part of the mitochondrial complex I assembly/MCIA complex that comprises at least the core subunits TMEM126B, NDUFAF1, ECSIT and ACAD9 and complement subunits such as COA1 and TMEM186. Associates with the intermediate 370 kDa subcomplex of incompletely assembled complex I. Interacts with TMEM70.

The protein resides in the mitochondrion membrane. As part of the MCIA complex, involved in the assembly of the mitochondrial complex I. Participates in constructing the membrane arm of complex I. The polypeptide is Complex I assembly factor TMEM126B, mitochondrial (Homo sapiens (Human)).